The following is an 84-amino-acid chain: Large ribosomal subunit protein bL27 (84 aa).

The interval 1 to 21 (MAHKKGGGSTKNGRDSNPKYL) is disordered.

Belongs to the bacterial ribosomal protein bL27 family.

The chain is Large ribosomal subunit protein bL27 from Chlorobium limicola (strain DSM 245 / NBRC 103803 / 6330).